A 133-amino-acid chain; its full sequence is Ribonuclease P protein component (133 aa).

This sequence belongs to the RnpA family. As to quaternary structure, consists of a catalytic RNA component (M1 or rnpB) and a protein subunit.

The catalysed reaction is Endonucleolytic cleavage of RNA, removing 5'-extranucleotides from tRNA precursor.. RNaseP catalyzes the removal of the 5'-leader sequence from pre-tRNA to produce the mature 5'-terminus. It can also cleave other RNA substrates such as 4.5S RNA. The protein component plays an auxiliary but essential role in vivo by binding to the 5'-leader sequence and broadening the substrate specificity of the ribozyme. The chain is Ribonuclease P protein component from Pseudomonas savastanoi pv. phaseolicola (strain 1448A / Race 6) (Pseudomonas syringae pv. phaseolicola (strain 1448A / Race 6)).